A 95-amino-acid polypeptide reads, in one-letter code: uncharacterized protein (95 aa).

The segment at residues 1–24 (MKKLATLTALAGALTMAVATAAQA) is a signal peptide (or 21). Positions 55–89 (EGKCGADKAKSAEGKCGEGKCGADKAKSAEGKCGE) are enriched in basic and acidic residues. The segment at 55–95 (EGKCGADKAKSAEGKCGEGKCGADKAKSAEGKCGEGKCGSK) is disordered.

This is an uncharacterized protein from Haemophilus influenzae (strain ATCC 51907 / DSM 11121 / KW20 / Rd).